Here is a 281-residue protein sequence, read N- to C-terminus: MALIKLARQLGLIDTIYVDGARPDPNNDPEESFNEDEVTEANSVPAKSKKSRKSKRLAMQPYSYVIAVDFEATCWEKQAPPEWREAEIIEFPAVLVNLKTGKIEAEFHQYILPFESPRLSAYCTELTGIQQKTVDSGMPLRTAIVMFNEWLRNEMRARNLTLPKMNKSNILGNCAFVTWTDWDFGICLAKECSRKGIRKPAYFNQWIDVRAIYRSWYKYRPCNFTDALSHVGLAFEGKAHSGIDDAKNLGALMCKMVRDGALFSITKDLTPYQQLNPRFVL.

The tract at residues 19–52 (DGARPDPNNDPEESFNEDEVTEANSVPAKSKKSR) is disordered. Residues 27 to 39 (NDPEESFNEDEVT) show a composition bias toward acidic residues. Residues 64 to 262 (YVIAVDFEAT…MCKMVRDGAL (199 aa)) enclose the Exonuclease domain. Mg(2+)-binding residues include D69 and E71. Catalysis depends on E71, which acts as the Proton acceptor. AMP contacts are provided by E71 and A72. Residue D183 participates in Mg(2+) binding. H240 acts as the Proton acceptor in catalysis. Position 240 (H240) interacts with AMP. D245 contributes to the Mg(2+) binding site.

This sequence belongs to the ERI2 family. The cofactor is Mg(2+).

It is found in the cytoplasm. Its subcellular location is the nucleus. The protein resides in the nucleolus. Its function is as follows. A broad-specificity exonuclease, capable of degrading both structure-specific DNA and RNA targets without sequence specificity in vitro. Requires two to five unpaired nucleotides in the 3' region for efficient binding and nuclease activity. Binds with higher affinity to RNA and DNA stem-loop substrates compared to single-stranded substrate. Binds to the 3'-end of histone mRNAs and degrades them, suggesting that it might play a role in histone mRNA decay after replication. Can readily cleave the histone stem-loop RNA beyond the -12 (UUU) position in the loop to produce -14 and then -16 oligonucleotide fragments for both the stem-loop and the reverse stem-loop. Cleaves both the single-stranded 3' flank as well as the double-stranded stem portion of histone stem-loop RNA. Might affect histone mRNA 3' processing thereby regulating histone protein expression. Has an important role in development and tissue formation. Might have a role in 5.8S rRNA precursor processing. In Drosophila melanogaster (Fruit fly), this protein is 3'-5' exonuclease Snipper.